The following is a 137-amino-acid chain: uncharacterized protein (137 aa).

This is an uncharacterized protein from Acidianus convivator (ATV).